Here is a 153-residue protein sequence, read N- to C-terminus: Small ribosomal subunit protein uS19A (153 aa).

Belongs to the universal ribosomal protein uS19 family. In terms of assembly, component of the small ribosomal subunit (SSU). Mature yeast ribosomes consist of a small (40S) and a large (60S) subunit. The 40S small subunit contains 1 molecule of ribosomal RNA (18S rRNA) and at least 33 different proteins. The large 60S subunit contains 3 rRNA molecules (25S, 5.8S and 5S rRNA) and at least 46 different proteins.

The protein resides in the cytoplasm. Its subcellular location is the nucleus. The protein localises to the nucleolus. Functionally, component of the ribosome, a large ribonucleoprotein complex responsible for the synthesis of proteins in the cell. The small ribosomal subunit (SSU) binds messenger RNAs (mRNAs) and translates the encoded message by selecting cognate aminoacyl-transfer RNA (tRNA) molecules. The large subunit (LSU) contains the ribosomal catalytic site termed the peptidyl transferase center (PTC), which catalyzes the formation of peptide bonds, thereby polymerizing the amino acids delivered by tRNAs into a polypeptide chain. The nascent polypeptides leave the ribosome through a tunnel in the LSU and interact with protein factors that function in enzymatic processing, targeting, and the membrane insertion of nascent chains at the exit of the ribosomal tunnel. uS19 is involved in the nuclear export of the small ribosomal subunit precursor. Has a role in the late stage of the assembly of pre-40S particles within the nucleus and controls their export to the cytoplasm. The chain is Small ribosomal subunit protein uS19A (rps1501) from Schizosaccharomyces pombe (strain 972 / ATCC 24843) (Fission yeast).